The chain runs to 876 residues: Alanine--tRNA ligase (876 aa).

4 residues coordinate Zn(2+): H565, H569, C667, and H671.

Belongs to the class-II aminoacyl-tRNA synthetase family. The cofactor is Zn(2+).

Its subcellular location is the cytoplasm. The catalysed reaction is tRNA(Ala) + L-alanine + ATP = L-alanyl-tRNA(Ala) + AMP + diphosphate. Catalyzes the attachment of alanine to tRNA(Ala) in a two-step reaction: alanine is first activated by ATP to form Ala-AMP and then transferred to the acceptor end of tRNA(Ala). Also edits incorrectly charged Ser-tRNA(Ala) and Gly-tRNA(Ala) via its editing domain. The protein is Alanine--tRNA ligase of Staphylococcus aureus (strain MSSA476).